Here is a 343-residue protein sequence, read N- to C-terminus: L-threonine 3-dehydrogenase (343 aa).

C40 is a Zn(2+) binding site. Residues T42 and H45 each act as charge relay system in the active site. Residues H65, E66, C95, C98, C101, and C109 each contribute to the Zn(2+) site. NAD(+) contacts are provided by residues I177, D197, R202, 264–266 (LGI), and 288–289 (IY).

The protein belongs to the zinc-containing alcohol dehydrogenase family. Homotetramer. It depends on Zn(2+) as a cofactor.

The protein resides in the cytoplasm. The enzyme catalyses L-threonine + NAD(+) = (2S)-2-amino-3-oxobutanoate + NADH + H(+). It participates in amino-acid degradation; L-threonine degradation via oxydo-reductase pathway; glycine from L-threonine: step 1/2. Functionally, catalyzes the NAD(+)-dependent oxidation of L-threonine to 2-amino-3-ketobutyrate. The polypeptide is L-threonine 3-dehydrogenase (Aliivibrio salmonicida (strain LFI1238) (Vibrio salmonicida (strain LFI1238))).